The primary structure comprises 483 residues: MAYIEGNTGKWEYVIGLEIHAQISSKSKLFSGSSTIFAANPNSQVSYVDAAMPGMLPVLNKHCVHQAIKTGLGLKAKINKYSVFDRKNYFYADLPQGYQISQFYYPIVQNGTMEIPTSTGDLKTIRINRLHLEQDAGKSMHDQSPHYSFIDLNRAGIGLMEIVTEPDISSPEEAAEFVKKLRNLLRYIGSCDGDMEKGSMRCDANISVRRSGEPLGTRCEIKNINSIRNIIKAIEFEAKRQVDLLESGEEIIQETRLFNADSGETRTMRLKEEALDYRYFPDPDLLPLVISDELINELKANLPELPDQKIEKYTKEFSLSKYDAEVIVADESVAEYFEKAANECNPKMLTNWLTSELFGQLNKASIGINECKITPSNFAKLVKLIENDTISGKIAKTVFEIMFETGKAPDKIIEEKGLVQVSDNNVLNTVIDEVIAENPESVEGYRSGKDKLFGFFVGQVMKKTDGKANPTLVNQLLKEKLSS.

This sequence belongs to the GatB/GatE family. GatB subfamily. Heterotrimer of A, B and C subunits.

The enzyme catalyses L-glutamyl-tRNA(Gln) + L-glutamine + ATP + H2O = L-glutaminyl-tRNA(Gln) + L-glutamate + ADP + phosphate + H(+). It carries out the reaction L-aspartyl-tRNA(Asn) + L-glutamine + ATP + H2O = L-asparaginyl-tRNA(Asn) + L-glutamate + ADP + phosphate + 2 H(+). Allows the formation of correctly charged Asn-tRNA(Asn) or Gln-tRNA(Gln) through the transamidation of misacylated Asp-tRNA(Asn) or Glu-tRNA(Gln) in organisms which lack either or both of asparaginyl-tRNA or glutaminyl-tRNA synthetases. The reaction takes place in the presence of glutamine and ATP through an activated phospho-Asp-tRNA(Asn) or phospho-Glu-tRNA(Gln). In Rickettsia rickettsii (strain Iowa), this protein is Aspartyl/glutamyl-tRNA(Asn/Gln) amidotransferase subunit B.